Consider the following 352-residue polypeptide: Protein RecA (352 aa).

Residue 67–74 (GPESSGKT) participates in ATP binding.

The protein belongs to the RecA family.

It localises to the cytoplasm. Can catalyze the hydrolysis of ATP in the presence of single-stranded DNA, the ATP-dependent uptake of single-stranded DNA by duplex DNA, and the ATP-dependent hybridization of homologous single-stranded DNAs. It interacts with LexA causing its activation and leading to its autocatalytic cleavage. The protein is Protein RecA of Chlamydia trachomatis serovar A (strain ATCC VR-571B / DSM 19440 / HAR-13).